A 304-amino-acid polypeptide reads, in one-letter code: UDP-N-acetylenolpyruvoylglucosamine reductase (304 aa).

Residues 32-198 form the FAD-binding PCMH-type domain; the sequence is RVGGPADILV…LSAELELQEG (167 aa). Arginine 177 is a catalytic residue. Serine 227 serves as the catalytic Proton donor. The active site involves glutamate 297.

Belongs to the MurB family. Requires FAD as cofactor.

The protein localises to the cytoplasm. It carries out the reaction UDP-N-acetyl-alpha-D-muramate + NADP(+) = UDP-N-acetyl-3-O-(1-carboxyvinyl)-alpha-D-glucosamine + NADPH + H(+). It participates in cell wall biogenesis; peptidoglycan biosynthesis. In terms of biological role, cell wall formation. In Clostridioides difficile (strain 630) (Peptoclostridium difficile), this protein is UDP-N-acetylenolpyruvoylglucosamine reductase.